A 165-amino-acid chain; its full sequence is Thiol peroxidase (165 aa).

One can recognise a Thioredoxin domain in the interval 18–164; that stretch reads RKVGDKAPNF…YEAAIEAAKK (147 aa). Catalysis depends on C60, which acts as the Cysteine sulfenic acid (-SOH) intermediate. An intrachain disulfide couples C60 to C94.

Belongs to the peroxiredoxin family. Tpx subfamily. Homodimer.

The enzyme catalyses a hydroperoxide + [thioredoxin]-dithiol = an alcohol + [thioredoxin]-disulfide + H2O. Its function is as follows. Thiol-specific peroxidase that catalyzes the reduction of hydrogen peroxide and organic hydroperoxides to water and alcohols, respectively. Plays a role in cell protection against oxidative stress by detoxifying peroxides. The chain is Thiol peroxidase from Listeria monocytogenes serovar 1/2a (strain ATCC BAA-679 / EGD-e).